We begin with the raw amino-acid sequence, 386 residues long: Succinyl-diaminopimelate desuccinylase (386 aa).

H76 is a binding site for Zn(2+). Residue D78 is part of the active site. D110 is a Zn(2+) binding site. The Proton acceptor role is filled by E144. Zn(2+) contacts are provided by E145, E173, and H359.

Belongs to the peptidase M20A family. DapE subfamily. In terms of assembly, homodimer. Requires Zn(2+) as cofactor. Co(2+) serves as cofactor.

It carries out the reaction N-succinyl-(2S,6S)-2,6-diaminopimelate + H2O = (2S,6S)-2,6-diaminopimelate + succinate. Its pathway is amino-acid biosynthesis; L-lysine biosynthesis via DAP pathway; LL-2,6-diaminopimelate from (S)-tetrahydrodipicolinate (succinylase route): step 3/3. Catalyzes the hydrolysis of N-succinyl-L,L-diaminopimelic acid (SDAP), forming succinate and LL-2,6-diaminopimelate (DAP), an intermediate involved in the bacterial biosynthesis of lysine and meso-diaminopimelic acid, an essential component of bacterial cell walls. This chain is Succinyl-diaminopimelate desuccinylase, found in Chromohalobacter salexigens (strain ATCC BAA-138 / DSM 3043 / CIP 106854 / NCIMB 13768 / 1H11).